The sequence spans 147 residues: UPF0306 protein YhbP (147 aa).

The protein belongs to the UPF0306 family.

In Escherichia coli O17:K52:H18 (strain UMN026 / ExPEC), this protein is UPF0306 protein YhbP.